Reading from the N-terminus, the 175-residue chain is Transcriptional regulator GadE (175 aa).

In terms of domain architecture, HTH luxR-type spans 109-174 (HKNSQLCFSH…DIVTLGITSY (66 aa)). A DNA-binding region (H-T-H motif) is located at residues 133 to 152 (ESNITSTLNISQQTLKIQKF).

Functionally, regulates the expression of several genes involved in acid resistance. Required for the expression of gadA and gadBC, among others, regardless of media or growth conditions. Binds directly to the 20 bp GAD box found in the control regions of both loci. Could be involved in the regulation of the genes coding for the type III secretion system in enterohaemorragic strains. The polypeptide is Transcriptional regulator GadE (gadE) (Escherichia coli O157:H7).